The primary structure comprises 490 residues: MTERVDPKKLIKGGLHDWEVVIGMEIHAQVTSRSKLFSGASTEFGGEPNDHVSLVDAAMPGMLPVINEECVAQAVRTGLGLKAQINLRSVFDRKNYFYPDLPQGYQISQYKDPIVGEGEVLVDLPEGESITVGIERLHLEQDAGKSLHDQDPTKSFVDLNRSGVALMEIVSRPDLRSSEEARAYVTKLRTILRYLGTCDGDMEKGSLRADVNVSVRRPGEPLGTRCEIKNVNSIRFIGQAIETEARRQIAILEDGGKIDQETRLYDPGKGETRSMRSKEEAHDYRYFPDPDLLPLEFDQAYVDALASGLPELPDAKKARFIKDFGLSAYDAGVLVAERASADYFEAVARGRDGKAAANWVINELFGRLNKEGRSIEDTPVSAEQLGTIVDLIGDGVISGKIAKDLFEIVWSEGGDPRAIVEARGMKQVTDTGAIEAAVDAIIAANPDKVEQAKAKPTLLGWFVGQTMKATGGKANPAAVNALLKDKLGIE.

This sequence belongs to the GatB/GatE family. GatB subfamily. As to quaternary structure, heterotrimer of A, B and C subunits.

It carries out the reaction L-glutamyl-tRNA(Gln) + L-glutamine + ATP + H2O = L-glutaminyl-tRNA(Gln) + L-glutamate + ADP + phosphate + H(+). The enzyme catalyses L-aspartyl-tRNA(Asn) + L-glutamine + ATP + H2O = L-asparaginyl-tRNA(Asn) + L-glutamate + ADP + phosphate + 2 H(+). Its function is as follows. Allows the formation of correctly charged Asn-tRNA(Asn) or Gln-tRNA(Gln) through the transamidation of misacylated Asp-tRNA(Asn) or Glu-tRNA(Gln) in organisms which lack either or both of asparaginyl-tRNA or glutaminyl-tRNA synthetases. The reaction takes place in the presence of glutamine and ATP through an activated phospho-Asp-tRNA(Asn) or phospho-Glu-tRNA(Gln). This chain is Aspartyl/glutamyl-tRNA(Asn/Gln) amidotransferase subunit B, found in Methylorubrum extorquens (strain CM4 / NCIMB 13688) (Methylobacterium extorquens).